The primary structure comprises 20 residues: Cytochrome c oxidase subunit 8B, mitochondrial (20 aa).

Residues 1 to 20 (LSGKPAKXHLSVGEQAIAMT) are disordered.

It belongs to the cytochrome c oxidase VIII family. Component of the cytochrome c oxidase (complex IV, CIV), a multisubunit enzyme composed of 14 subunits. The complex is composed of a catalytic core of 3 subunits MT-CO1, MT-CO2 and MT-CO3, encoded in the mitochondrial DNA, and 11 supernumerary subunits COX4I, COX5A, COX5B, COX6A, COX6B, COX6C, COX7A, COX7B, COX7C, COX8 and NDUFA4, which are encoded in the nuclear genome. The complex exists as a monomer or a dimer and forms supercomplexes (SCs) in the inner mitochondrial membrane with NADH-ubiquinone oxidoreductase (complex I, CI) and ubiquinol-cytochrome c oxidoreductase (cytochrome b-c1 complex, complex III, CIII), resulting in different assemblies (supercomplex SCI(1)III(2)IV(1) and megacomplex MCI(2)III(2)IV(2)).

It localises to the mitochondrion inner membrane. The protein operates within energy metabolism; oxidative phosphorylation. Functionally, component of the cytochrome c oxidase, the last enzyme in the mitochondrial electron transport chain which drives oxidative phosphorylation. The respiratory chain contains 3 multisubunit complexes succinate dehydrogenase (complex II, CII), ubiquinol-cytochrome c oxidoreductase (cytochrome b-c1 complex, complex III, CIII) and cytochrome c oxidase (complex IV, CIV), that cooperate to transfer electrons derived from NADH and succinate to molecular oxygen, creating an electrochemical gradient over the inner membrane that drives transmembrane transport and the ATP synthase. Cytochrome c oxidase is the component of the respiratory chain that catalyzes the reduction of oxygen to water. Electrons originating from reduced cytochrome c in the intermembrane space (IMS) are transferred via the dinuclear copper A center (CU(A)) of subunit 2 and heme A of subunit 1 to the active site in subunit 1, a binuclear center (BNC) formed by heme A3 and copper B (CU(B)). The BNC reduces molecular oxygen to 2 water molecules using 4 electrons from cytochrome c in the IMS and 4 protons from the mitochondrial matrix. This Oncorhynchus mykiss (Rainbow trout) protein is Cytochrome c oxidase subunit 8B, mitochondrial.